The following is a 760-amino-acid chain: Acetyl-CoA decarbonylase/synthase complex subunit alpha 1 (760 aa).

[4Fe-4S] cluster is bound by residues Cys-56, Cys-59, Cys-60, Cys-62, Cys-67, and Cys-77. Residue His-100 participates in CO binding. Residues His-231, Cys-259, and Cys-298 each contribute to the [Ni-4Fe-4S] cluster site. 2 4Fe-4S ferredoxin-type domains span residues 381–410 and 418–450; these read KKLQ…VEAM and FEGL…MIED. Residues Cys-390, Cys-393, Cys-396, Cys-400, Cys-428, Cys-431, Cys-434, and Cys-438 each coordinate [4Fe-4S] cluster. [Ni-4Fe-4S] cluster is bound by residues Cys-496, Cys-525, and Cys-560.

It belongs to the Ni-containing carbon monoxide dehydrogenase family. As to quaternary structure, heterotetramer of two alpha and two epsilon subunits. The ACDS complex is made up of alpha, epsilon, beta, gamma and delta subunits with a probable stoichiometry of (alpha(2)epsilon(2))(4)-beta(8)-(gamma(1)delta(1))(8). The cofactor is [4Fe-4S] cluster. Requires [Ni-4Fe-4S] cluster as cofactor.

The enzyme catalyses CO + 2 oxidized [2Fe-2S]-[ferredoxin] + H2O = 2 reduced [2Fe-2S]-[ferredoxin] + CO2 + 2 H(+). In terms of biological role, part of the ACDS complex that catalyzes the reversible cleavage of acetyl-CoA, allowing autotrophic growth from CO(2). The alpha-epsilon subcomponent functions as a carbon monoxide dehydrogenase. This is Acetyl-CoA decarbonylase/synthase complex subunit alpha 1 from Methanopyrus kandleri (strain AV19 / DSM 6324 / JCM 9639 / NBRC 100938).